We begin with the raw amino-acid sequence, 231 residues long: Orotidine 5'-phosphate decarboxylase (231 aa).

Residues Asp11, Lys33, 60 to 69, Thr120, Arg181, Gln190, Gly210, and Arg211 each bind substrate; that span reads DLKFHDIPNT. Residue Lys62 is the Proton donor of the active site.

The protein belongs to the OMP decarboxylase family. Type 1 subfamily. As to quaternary structure, homodimer.

The enzyme catalyses orotidine 5'-phosphate + H(+) = UMP + CO2. The protein operates within pyrimidine metabolism; UMP biosynthesis via de novo pathway; UMP from orotate: step 2/2. Its function is as follows. Catalyzes the decarboxylation of orotidine 5'-monophosphate (OMP) to uridine 5'-monophosphate (UMP). The polypeptide is Orotidine 5'-phosphate decarboxylase (Vibrio cholerae serotype O1 (strain ATCC 39541 / Classical Ogawa 395 / O395)).